The sequence spans 1037 residues: Mediator of RNA polymerase II transcription subunit 14 (1037 aa).

Belongs to the Mediator complex subunit 14 family. In terms of assembly, component of the Mediator complex.

It is found in the nucleus. In terms of biological role, component of the Mediator complex, a coactivator involved in the regulated transcription of nearly all RNA polymerase II-dependent genes. Mediator functions as a bridge to convey information from gene-specific regulatory proteins to the basal RNA polymerase II transcription machinery. Mediator is recruited to promoters by direct interactions with regulatory proteins and serves as a scaffold for the assembly of a functional preinitiation complex with RNA polymerase II and the general transcription factors. This chain is Mediator of RNA polymerase II transcription subunit 14 (RGR1), found in Candida glabrata (strain ATCC 2001 / BCRC 20586 / JCM 3761 / NBRC 0622 / NRRL Y-65 / CBS 138) (Yeast).